Consider the following 367-residue polypeptide: Probable protein phosphatase 2C 67 (367 aa).

The tract at residues 1–79 (MAHQKREATS…DEKAATNSNV (79 aa)) is disordered. The span at 31–46 (AEKEHILTSDASHETN) shows a compositional bias: basic and acidic residues. One can recognise a PPM-type phosphatase domain in the interval 91 to 365 (EADAAEDKGC…DNCTAVLIVF (275 aa)). Asp131, Gly132, Asp312, and Asp356 together coordinate Mn(2+).

The protein belongs to the PP2C family. Mg(2+) serves as cofactor. Requires Mn(2+) as cofactor.

The catalysed reaction is O-phospho-L-seryl-[protein] + H2O = L-seryl-[protein] + phosphate. It catalyses the reaction O-phospho-L-threonyl-[protein] + H2O = L-threonyl-[protein] + phosphate. In Oryza sativa subsp. japonica (Rice), this protein is Probable protein phosphatase 2C 67.